A 235-amino-acid chain; its full sequence is Phosphoribosylaminoimidazole-succinocarboxamide synthase (235 aa).

Belongs to the SAICAR synthetase family.

The enzyme catalyses 5-amino-1-(5-phospho-D-ribosyl)imidazole-4-carboxylate + L-aspartate + ATP = (2S)-2-[5-amino-1-(5-phospho-beta-D-ribosyl)imidazole-4-carboxamido]succinate + ADP + phosphate + 2 H(+). Its pathway is purine metabolism; IMP biosynthesis via de novo pathway; 5-amino-1-(5-phospho-D-ribosyl)imidazole-4-carboxamide from 5-amino-1-(5-phospho-D-ribosyl)imidazole-4-carboxylate: step 1/2. This is Phosphoribosylaminoimidazole-succinocarboxamide synthase from Clostridium kluyveri (strain NBRC 12016).